A 329-amino-acid polypeptide reads, in one-letter code: Protein mlo2 (329 aa).

The UBR-type zinc finger occupies 33-104 (DTCTYSMGYL…HSIPCNLRKS (72 aa)). The PHD-type zinc-finger motif lies at 120–179 (GRFCICDTVYNPETEEGTMFQCILCEDWFHEKCLQKTNKGIAIPDAETFEWLVCSECSEK).

The protein belongs to the UBR7 family.

Functionally, not known, interfere with mitotic chromosome segregation when overexpressed. This Schizosaccharomyces pombe (strain 972 / ATCC 24843) (Fission yeast) protein is Protein mlo2 (mlo2).